Consider the following 108-residue polypeptide: Thiosulfate sulfurtransferase GlpE (108 aa).

Positions 17-105 (HQGTAVLVDI…WHRHFPSEVA (89 aa)) constitute a Rhodanese domain. Cys65 serves as the catalytic Cysteine persulfide intermediate.

This sequence belongs to the GlpE family.

It localises to the cytoplasm. It carries out the reaction thiosulfate + hydrogen cyanide = thiocyanate + sulfite + 2 H(+). The catalysed reaction is thiosulfate + [thioredoxin]-dithiol = [thioredoxin]-disulfide + hydrogen sulfide + sulfite + 2 H(+). Functionally, transferase that catalyzes the transfer of sulfur from thiosulfate to thiophilic acceptors such as cyanide or dithiols. May function in a CysM-independent thiosulfate assimilation pathway by catalyzing the conversion of thiosulfate to sulfite, which can then be used for L-cysteine biosynthesis. The protein is Thiosulfate sulfurtransferase GlpE of Citrobacter koseri (strain ATCC BAA-895 / CDC 4225-83 / SGSC4696).